The sequence spans 165 residues: CDP-archaeol synthase (165 aa).

The next 4 membrane-spanning stretches (helical) occupy residues 41-61, 72-92, 103-123, and 127-147; these read GLICGVLAGVLIGLVQIWLVG, ILSVTLLALGALLGDMGKSFI, AWPVADQYDLVVGAFLLTIIF, and WFFAVVTLPVLIAILVITPVL.

The protein belongs to the CDP-archaeol synthase family. Requires Mg(2+) as cofactor.

It is found in the cell membrane. The catalysed reaction is 2,3-bis-O-(geranylgeranyl)-sn-glycerol 1-phosphate + CTP + H(+) = CDP-2,3-bis-O-(geranylgeranyl)-sn-glycerol + diphosphate. The protein operates within membrane lipid metabolism; glycerophospholipid metabolism. Its function is as follows. Catalyzes the formation of CDP-2,3-bis-(O-geranylgeranyl)-sn-glycerol (CDP-archaeol) from 2,3-bis-(O-geranylgeranyl)-sn-glycerol 1-phosphate (DGGGP) and CTP. This reaction is the third ether-bond-formation step in the biosynthesis of archaeal membrane lipids. The sequence is that of CDP-archaeol synthase from Methanoregula boonei (strain DSM 21154 / JCM 14090 / 6A8).